The primary structure comprises 457 residues: Argininosuccinate lyase (457 aa).

Belongs to the lyase 1 family. Argininosuccinate lyase subfamily.

It is found in the cytoplasm. It catalyses the reaction 2-(N(omega)-L-arginino)succinate = fumarate + L-arginine. Its pathway is amino-acid biosynthesis; L-arginine biosynthesis; L-arginine from L-ornithine and carbamoyl phosphate: step 3/3. This chain is Argininosuccinate lyase, found in Escherichia coli O7:K1 (strain IAI39 / ExPEC).